We begin with the raw amino-acid sequence, 216 residues long: MOB kinase activator-like 1 homolog C (216 aa).

Zn(2+)-binding residues include Cys-78, Cys-83, His-160, and His-165.

It belongs to the MOB1/phocein family.

In Dictyostelium discoideum (Social amoeba), this protein is MOB kinase activator-like 1 homolog C (mobC).